We begin with the raw amino-acid sequence, 703 residues long: Polyribonucleotide nucleotidyltransferase (703 aa).

The Mg(2+) site is built by Asp485 and Asp491. The 60-residue stretch at 552-611 folds into the KH domain; the sequence is PRAYTINIDTDKIRTLIGTGGKTINKIIEETGVKIDIREDGTVFVLSSDADSANRALKMI. In terms of domain architecture, S1 motif spans 621-689; the sequence is GEVYLGKVTK…NQGRVNLSRK (69 aa).

The protein belongs to the polyribonucleotide nucleotidyltransferase family. Requires Mg(2+) as cofactor.

The protein resides in the cytoplasm. It catalyses the reaction RNA(n+1) + phosphate = RNA(n) + a ribonucleoside 5'-diphosphate. Its function is as follows. Involved in mRNA degradation. Catalyzes the phosphorolysis of single-stranded polyribonucleotides processively in the 3'- to 5'-direction. This Clostridium acetobutylicum (strain ATCC 824 / DSM 792 / JCM 1419 / IAM 19013 / LMG 5710 / NBRC 13948 / NRRL B-527 / VKM B-1787 / 2291 / W) protein is Polyribonucleotide nucleotidyltransferase.